Consider the following 401-residue polypeptide: Phosphoglycerate kinase (401 aa).

Substrate contacts are provided by residues 20–22 (DFN), arginine 35, 58–61 (HLGR), arginine 117, and arginine 154. ATP-binding positions include lysine 204, glycine 298, glutamate 329, and 358 to 361 (GGDS).

Belongs to the phosphoglycerate kinase family. As to quaternary structure, monomer.

It localises to the cytoplasm. It catalyses the reaction (2R)-3-phosphoglycerate + ATP = (2R)-3-phospho-glyceroyl phosphate + ADP. The protein operates within carbohydrate degradation; glycolysis; pyruvate from D-glyceraldehyde 3-phosphate: step 2/5. The chain is Phosphoglycerate kinase from Bifidobacterium adolescentis (strain ATCC 15703 / DSM 20083 / NCTC 11814 / E194a).